We begin with the raw amino-acid sequence, 141 residues long: Hemoglobin subunit alpha (141 aa).

Residues 1-141 form the Globin domain; that stretch reads VLSGEDKNNI…VSTVLTSKYR (141 aa). Phosphoserine is present on Ser-3. 2 positions are modified to N6-succinyllysine: Lys-7 and Lys-11. Lys-16 is modified (N6-acetyllysine; alternate). Lys-16 carries the N6-succinyllysine; alternate modification. The residue at position 24 (Tyr-24) is a Phosphotyrosine. At Lys-40 the chain carries N6-succinyllysine. Ser-49 is subject to Phosphoserine. O2 is bound at residue His-58. A heme b-binding site is contributed by His-87. Position 102 is a phosphoserine (Ser-102). Position 108 is a phosphothreonine (Thr-108). Phosphoserine occurs at positions 124 and 131. 2 positions are modified to phosphothreonine: Thr-134 and Thr-137. Position 138 is a phosphoserine (Ser-138).

This sequence belongs to the globin family. Heterotetramer of two alpha chains and two beta chains. As to expression, red blood cells.

Involved in oxygen transport from the lung to the various peripheral tissues. Its function is as follows. Hemopressin acts as an antagonist peptide of the cannabinoid receptor CNR1. Hemopressin-binding efficiently blocks cannabinoid receptor CNR1 and subsequent signaling. This is Hemoglobin subunit alpha (HBA) from Ondatra zibethicus (Muskrat).